The sequence spans 491 residues: Anthranilate synthase component 1 (491 aa).

L-tryptophan is bound by residues serine 49 and 271-273 (PYL). Chorismate is bound at residue 306-307 (GT). Glutamate 333 contributes to the Mg(2+) binding site. Chorismate-binding positions include tyrosine 421, arginine 441, 455 to 457 (GAG), and glycine 457. Position 470 (glutamate 470) interacts with Mg(2+).

The protein belongs to the anthranilate synthase component I family. In terms of assembly, heterotetramer consisting of two non-identical subunits: a beta subunit (TrpG) and a large alpha subunit (TrpE). Mg(2+) serves as cofactor.

The catalysed reaction is chorismate + L-glutamine = anthranilate + pyruvate + L-glutamate + H(+). It functions in the pathway amino-acid biosynthesis; L-tryptophan biosynthesis; L-tryptophan from chorismate: step 1/5. Feedback inhibited by tryptophan. Functionally, part of a heterotetrameric complex that catalyzes the two-step biosynthesis of anthranilate, an intermediate in the biosynthesis of L-tryptophan. In the first step, the glutamine-binding beta subunit (TrpG) of anthranilate synthase (AS) provides the glutamine amidotransferase activity which generates ammonia as a substrate that, along with chorismate, is used in the second step, catalyzed by the large alpha subunit of AS (TrpE) to produce anthranilate. In the absence of TrpG, TrpE can synthesize anthranilate directly from chorismate and high concentrations of ammonia. In Neisseria meningitidis serogroup C / serotype 2a (strain ATCC 700532 / DSM 15464 / FAM18), this protein is Anthranilate synthase component 1 (trpE).